Reading from the N-terminus, the 53-residue chain is UPF0391 membrane protein Bcen2424_6479 (53 aa).

2 helical membrane-spanning segments follow: residues 5–25 and 30–50; these read AIIFFIIAIIAAVFGFGGIAA and IAKILFYIFVVIFLVTLLLGV.

Belongs to the UPF0391 family.

It is found in the cell membrane. This Burkholderia cenocepacia (strain HI2424) protein is UPF0391 membrane protein Bcen2424_6479.